We begin with the raw amino-acid sequence, 160 residues long: Protein-export protein SecB (160 aa).

Belongs to the SecB family. Homotetramer, a dimer of dimers. One homotetramer interacts with 1 SecA dimer.

The protein localises to the cytoplasm. Its function is as follows. One of the proteins required for the normal export of preproteins out of the cell cytoplasm. It is a molecular chaperone that binds to a subset of precursor proteins, maintaining them in a translocation-competent state. It also specifically binds to its receptor SecA. This Nitrosomonas eutropha (strain DSM 101675 / C91 / Nm57) protein is Protein-export protein SecB.